The chain runs to 517 residues: Urethanase (517 aa).

Active-site charge relay system residues include lysine 98 and serine 173. Catalysis depends on serine 197, which acts as the Acyl-ester intermediate.

This sequence belongs to the amidase family. As to quaternary structure, homooctamer.

The catalysed reaction is urethane + H2O + H(+) = ethanol + NH4(+) + CO2. With respect to regulation, exhibits poor salt tolerance but excellent tolerance to low concentrations of ethanol. EDTA has almost no impact on activity. Activity is increased in the presence of Ca(2+), Mg(2+) and Co(3+) and inhibited in the presence of Al(3+), Zn(2+) and Cu(2+). Hydrolase that can catalyze the degradation of ethyl carbamate (also called urethane), a probable human carcinogen widely found in alcoholic beverages. Can also use methyl carbamate, butyl carbamate, acetamide and urea. Also catalyzes the enantioselective hydrolysis of 2-phenylpropionamide, alpha-chlorophenylacetamide, 2-methyl-3-phenylpropionamide and alpha-methoxyphenylacetamide to the corresponding acids. Is inactive on benzamide and L-glutamine. In Rhizobium radiobacter (Agrobacterium tumefaciens), this protein is Urethanase.